Reading from the N-terminus, the 402-residue chain is Type II NADH:quinone oxidoreductase (402 aa).

FAD-binding positions include Gly-12–Ala-16, Asn-39–Lys-40, and Val-83. Glu-172 is a catalytic residue. FAD is bound by residues Asp-302, Ala-319–Gln-320, and Lys-379.

The protein belongs to the NADH dehydrogenase family. As to quaternary structure, homodimer in solution. Forms homotetramers; dimer of dimers. FAD is required as a cofactor.

The protein localises to the cell membrane. The catalysed reaction is a quinone + NADH + H(+) = a quinol + NAD(+). It catalyses the reaction a menaquinone + NADH + H(+) = a menaquinol + NAD(+). It carries out the reaction a ubiquinone + NADH + H(+) = a ubiquinol + NAD(+). Inhibited by HQNO, a quinone derivative. Its function is as follows. Alternative, nonproton pumping NADH:quinone oxidoreductase that delivers electrons to the respiratory chain by oxidation of NADH and reduction of quinones, and contributes to the regeneration of NAD(+). Can use DMN, a menaquinone analog, 2,3-dimethoxy-5,6-dimethyl-benzoquinone (DDB), an ubiquinone analog, or 2,3,5,6-tetramethyl-1,4-benzoquinone (Duroquinone, DQ) a plastoquinone analog as electron acceptors. The polypeptide is Type II NADH:quinone oxidoreductase (Staphylococcus aureus (strain NCTC 8325 / PS 47)).